A 340-amino-acid chain; its full sequence is MGNVMASTADAESSRGRGHLSAGLRLPEAPQYSGGVPPQMVEALKAEAKKPELTNPGTLEELHSRCRDIQANTFEGAKIMVNKGLSNHFQVTHTINMNSAGPSGYRFGATYVGTKQYGPTEAFPVLLGEIDPMGNLNANVIHQLTSRLRCKFASQFQDSKLVGTQLTGDYRGRDYTLTLTMGNPGFFTSSGVFVCQYLQSVTKRLALGSEFAYHYGPNVPGRQVAVLSAVGRYAFGDTVWSCTLGPAGFHLSYYQKASDQLQIGVEVETNIRQQESTATVAYQIDLPKADLVFRGSLDSNWLISGVLEKRLQPLPFSLAISGRMNHQKNSFRLGCGLMIG.

The interval 1–37 is disordered; the sequence is MGNVMASTADAESSRGRGHLSAGLRLPEAPQYSGGVP.

This sequence belongs to the Tom40 family. As to quaternary structure, forms part of the preprotein translocase of the outer mitochondrial membrane (TOM complex). Interacts with mitochondrial targeting sequences. In terms of tissue distribution, only expressed in the male germline, detected in primary spermatocytes as well as post-meiotic stages. Not detected in stem cells and spermatogonia near the tip of the testis.

It is found in the mitochondrion outer membrane. In terms of biological role, channel-forming protein essential for import of protein precursors into mitochondria. This Drosophila melanogaster (Fruit fly) protein is Mitochondrial import receptor subunit TOM40 homolog 2.